We begin with the raw amino-acid sequence, 674 residues long: DNA mismatch repair protein MutL (674 aa).

This sequence belongs to the DNA mismatch repair MutL/HexB family.

In terms of biological role, this protein is involved in the repair of mismatches in DNA. It is required for dam-dependent methyl-directed DNA mismatch repair. May act as a 'molecular matchmaker', a protein that promotes the formation of a stable complex between two or more DNA-binding proteins in an ATP-dependent manner without itself being part of a final effector complex. The chain is DNA mismatch repair protein MutL from Clostridium perfringens (strain ATCC 13124 / DSM 756 / JCM 1290 / NCIMB 6125 / NCTC 8237 / Type A).